Reading from the N-terminus, the 292-residue chain is NAD kinase (292 aa).

The active-site Proton acceptor is the D73. Residues 73-74, 147-148, H158, R175, D177, 188-193, and Q247 contribute to the NAD(+) site; these read DG, NE, and TGYSLS.

Belongs to the NAD kinase family. It depends on a divalent metal cation as a cofactor.

The protein resides in the cytoplasm. It carries out the reaction NAD(+) + ATP = ADP + NADP(+) + H(+). In terms of biological role, involved in the regulation of the intracellular balance of NAD and NADP, and is a key enzyme in the biosynthesis of NADP. Catalyzes specifically the phosphorylation on 2'-hydroxyl of the adenosine moiety of NAD to yield NADP. The chain is NAD kinase from Buchnera aphidicola subsp. Acyrthosiphon pisum (strain 5A).